A 365-amino-acid polypeptide reads, in one-letter code: MDGPAEPQIPGLWDTYEDDISEISQKLPGEYFRYKGVPFPVGLYSLESISLAENTQDVRDDDIFIITYPKSGTTWMIEIICLILKEGDPSWIRSVPIWERAPWCETIVGAFSLPDQYSPRLMSSHLPIQIFTKAFFSSKAKVIYMGRNPRDVVVSLYHYSKIAGQLKDPGTPDQFLRDFLKGEVQFGSWFDHIKGWLRMKGKDNFLFITYEELQQDLQGSVERICGFLGRPLGKEALGSVVAHSTFSAMKANTMSNYTLLPPSLLDHRRGAFLRKGVCGDWKNHFTVAQSEAFDRAYRKQMRGMPTFPWDEDPEEDGSPDPEPSPEPEPKPSLEPNTSLEREPRPNSSPSPSPGQASETPHPRPS.

3'-phosphoadenylyl sulfate is bound at residue 70–75; sequence KSGTTW. Substrate-binding residues include tryptophan 98, tryptophan 103, and histidine 125. Histidine 125 acts as the Proton acceptor in catalysis. Residues arginine 147, serine 155, tyrosine 210, 244–249, and 274–276 each bind 3'-phosphoadenylyl sulfate; these read STFSAM and RKG. The segment at 303–365 is disordered; sequence GMPTFPWDED…ASETPHPRPS (63 aa). The span at 309–325 shows a compositional bias: acidic residues; it reads WDEDPEEDGSPDPEPSP. Phosphoserine is present on serine 348.

The protein belongs to the sulfotransferase 1 family. Phosphorylated. In terms of tissue distribution, expressed in the stratum granulosum-stratum corneum junction in the skin (at protein level). Expressed highly in placenta, prostate and trachea and lower expression in the small intestine and lung.

It localises to the cytoplasm. Its subcellular location is the cytosol. The protein resides in the microsome. It is found in the nucleus. The catalysed reaction is an alcohol + 3'-phosphoadenylyl sulfate = an alkyl sulfate + adenosine 3',5'-bisphosphate + H(+). It catalyses the reaction 3beta-hydroxyandrost-5-en-17-one + 3'-phosphoadenylyl sulfate = dehydroepiandrosterone 3-sulfate + adenosine 3',5'-bisphosphate + H(+). It carries out the reaction (24S)-hydroxycholesterol + 3'-phosphoadenylyl sulfate = (24S)-hydroxycholesterol 3-sulfate + adenosine 3',5'-bisphosphate + H(+). The enzyme catalyses cholesterol + 3'-phosphoadenylyl sulfate = cholesterol sulfate + adenosine 3',5'-bisphosphate + H(+). The catalysed reaction is pregnenolone + 3'-phosphoadenylyl sulfate = pregnenolone sulfate + adenosine 3',5'-bisphosphate + H(+). Sulfotransferase that utilizes 3'-phospho-5'-adenylyl sulfate (PAPS) as sulfonate donor to catalyze the sulfate conjugation. Responsible for the sulfation of cholesterol. Catalyzes sulfation of the 3beta-hydroxyl groups of steroids, such as, pregnenolone and dehydroepiandrosterone (DHEA). Preferentially sulfonates cholesterol, while it also has significant activity with pregnenolone and DHEA. Plays a role in epidermal cholesterol metabolism and in the regulation of epidermal proliferation and differentiation. Functionally, sulfonates pregnenolone but not cholesterol. The chain is Sulfotransferase 2B1 (SULT2B1) from Homo sapiens (Human).